A 143-amino-acid chain; its full sequence is Small ribosomal subunit protein eS19B (143 aa).

Belongs to the eukaryotic ribosomal protein eS19 family. Component of the small ribosomal subunit (SSU). Mature yeast ribosomes consist of a small (40S) and a large (60S) subunit. The 40S small subunit contains 1 molecule of ribosomal RNA (18S rRNA) and at least 33 different proteins. The large 60S subunit contains 3 rRNA molecules (25S, 5.8S and 5S rRNA) and at least 46 different proteins.

Its subcellular location is the cytoplasm. It is found in the nucleus. Functionally, component of the ribosome, a large ribonucleoprotein complex responsible for the synthesis of proteins in the cell. The small ribosomal subunit (SSU) binds messenger RNAs (mRNAs) and translates the encoded message by selecting cognate aminoacyl-transfer RNA (tRNA) molecules. The large subunit (LSU) contains the ribosomal catalytic site termed the peptidyl transferase center (PTC), which catalyzes the formation of peptide bonds, thereby polymerizing the amino acids delivered by tRNAs into a polypeptide chain. The nascent polypeptides leave the ribosome through a tunnel in the LSU and interact with protein factors that function in enzymatic processing, targeting, and the membrane insertion of nascent chains at the exit of the ribosomal tunnel. eS19 is required for proper maturation of the small (40S) ribosomal subunit. Binds to 40S pre-ribosomal particles, probably required after association of NOC4 but before association of ENP1, TSR1 and RIO2 with 20/21S pre-rRNA. The protein is Small ribosomal subunit protein eS19B (rps1902) of Schizosaccharomyces pombe (strain 972 / ATCC 24843) (Fission yeast).